The chain runs to 139 residues: MVRFKSRYLLFEVLYPEAKEFFDYPTIPSDSSITTSSLSKIIRTMVAENFGDVGIGKVASSLTVKYFSPNTSTGILRVSRQHFRLAWAALVLIRELYGKPVIIRVVRVSGTIKKAELAAIERNKSEIHNISLMDEPIEV.

The protein belongs to the eukaryotic/archaeal RNase P protein component 2 family.

Its subcellular location is the nucleus. It carries out the reaction Endonucleolytic cleavage of RNA, removing 5'-extranucleotides from tRNA precursor.. Functionally, component of ribonuclease P, a protein complex that generates mature tRNA molecules by cleaving their 5'-ends. Also a component of RNase MRP, which cleaves pre-rRNA sequences. This Schizosaccharomyces pombe (strain 972 / ATCC 24843) (Fission yeast) protein is Ribonuclease P/MRP protein subunit POP5.